The following is a 399-amino-acid chain: Enoyl-[acyl-carrier-protein] reductase [NADH] 2 (399 aa).

NAD(+) contacts are provided by residues 48 to 53, 75 to 76, 112 to 113, and 141 to 142; these read GASSGF, FE, DA, and LA. Tyr-227 contributes to the substrate binding site. Residue Tyr-237 is the Proton donor of the active site. NAD(+)-binding positions include Lys-246 and 275-277; that span reads LVT.

Belongs to the TER reductase family. In terms of assembly, monomer.

It catalyses the reaction a 2,3-saturated acyl-[ACP] + NAD(+) = a (2E)-enoyl-[ACP] + NADH + H(+). Its pathway is lipid metabolism; fatty acid biosynthesis. In terms of biological role, involved in the final reduction of the elongation cycle of fatty acid synthesis (FAS II). Catalyzes the reduction of a carbon-carbon double bond in an enoyl moiety that is covalently linked to an acyl carrier protein (ACP). This is Enoyl-[acyl-carrier-protein] reductase [NADH] 2 from Vibrio parahaemolyticus serotype O3:K6 (strain RIMD 2210633).